The chain runs to 299 residues: Transcription elongation factor A protein 2 (299 aa).

The region spanning 5–82 is the TFIIS N-terminal domain; that stretch reads EEIARIARRL…KSWKKLLDVS (78 aa). Residue Lys-57 forms a Glycyl lysine isopeptide (Lys-Gly) (interchain with G-Cter in ubiquitin) linkage. A phosphoserine mark is found at Ser-59 and Ser-100. Residues 83–126 are disordered; sequence DGKSRDQGRGTPLPTSSSKDASGTTDLSCKKPDPPRTSSTPRIT. Positions 95-109 are enriched in polar residues; the sequence is LPTSSSKDASGTTDL. The 117-residue stretch at 138 to 254 folds into the TFIIS central domain; it reads VRNKCREMLT…EHQMARTGGT (117 aa). The segment at 257 to 297 adopts a TFIIS-type zinc-finger fold; sequence DLFTCNKCRKKNCTYTQVQTRSSDEPMTTYVVCNECGNRWK. Residues Cys-261, Cys-264, Cys-289, and Cys-292 each coordinate Zn(2+).

The protein belongs to the TFS-II family. In terms of assembly, interacts with the basal transcription factor GTF2B. Interacts with REXO1. Testis specific.

It is found in the nucleus. Necessary for efficient RNA polymerase II transcription elongation past template-encoded arresting sites. The arresting sites in DNA have the property of trapping a certain fraction of elongating RNA polymerases that pass through, resulting in locked ternary complexes. Cleavage of the nascent transcript by S-II allows the resumption of elongation from the new 3'-terminus. In Rattus norvegicus (Rat), this protein is Transcription elongation factor A protein 2 (Tcea2).